A 316-amino-acid chain; its full sequence is Pantothenate kinase (316 aa).

Residue 95-102 (GSVAVGKS) participates in ATP binding.

It belongs to the prokaryotic pantothenate kinase family.

The protein resides in the cytoplasm. The enzyme catalyses (R)-pantothenate + ATP = (R)-4'-phosphopantothenate + ADP + H(+). Its pathway is cofactor biosynthesis; coenzyme A biosynthesis; CoA from (R)-pantothenate: step 1/5. This Escherichia coli O17:K52:H18 (strain UMN026 / ExPEC) protein is Pantothenate kinase.